A 377-amino-acid polypeptide reads, in one-letter code: Alkane 1-monooxygenase 2 (377 aa).

The next 4 membrane-spanning stretches (helical) occupy residues 17-37 (GYWI…WSLG), 43-63 (AWPW…DAIV), 87-107 (VLSL…GWIL), and 116-136 (VGQL…GITV). Residues His-138, His-142, His-168, His-172, and His-173 each coordinate Fe cation. Residues 236 to 256 (ALFLLGFSLAFGWLGAIFFLG) traverse the membrane as a helical segment. His-312, His-315, and His-316 together coordinate Fe cation.

The protein belongs to the fatty acid desaturase type 1 family. AlkB subfamily. Requires Fe(3+) as cofactor.

The protein localises to the cell inner membrane. The enzyme catalyses octane + 2 reduced [rubredoxin] + O2 + 2 H(+) = 2 oxidized [rubredoxin] + octan-1-ol + H2O. Its pathway is hydrocarbon metabolism; alkane degradation. Its function is as follows. Catalyzes the hydroxylation of n-alkanes in the presence of a NADH-rubredoxin reductase and rubredoxin. It preferably hydroxylases C12-C20 hydrocarbons. This Pseudomonas aeruginosa (strain ATCC 15692 / DSM 22644 / CIP 104116 / JCM 14847 / LMG 12228 / 1C / PRS 101 / PAO1) protein is Alkane 1-monooxygenase 2 (alkB2).